The chain runs to 150 residues: Cyanate hydratase (150 aa).

Active-site residues include R91, E94, and S117.

Belongs to the cyanase family.

It carries out the reaction cyanate + hydrogencarbonate + 3 H(+) = NH4(+) + 2 CO2. Functionally, catalyzes the reaction of cyanate with bicarbonate to produce ammonia and carbon dioxide. The protein is Cyanate hydratase of Synechococcus sp. (strain CC9311).